Here is a 174-residue protein sequence, read N- to C-terminus: RNA pyrophosphohydrolase (174 aa).

The 144-residue stretch at 6–149 (GFRANVGIII…KRDVYRKVMK (144 aa)) folds into the Nudix hydrolase domain. Positions 38-59 (GGVDEGESAEQAMYRELYEEVG) match the Nudix box motif.

Belongs to the Nudix hydrolase family. RppH subfamily. A divalent metal cation serves as cofactor.

In terms of biological role, accelerates the degradation of transcripts by removing pyrophosphate from the 5'-end of triphosphorylated RNA, leading to a more labile monophosphorylated state that can stimulate subsequent ribonuclease cleavage. The polypeptide is RNA pyrophosphohydrolase (Shewanella loihica (strain ATCC BAA-1088 / PV-4)).